Consider the following 174-residue polypeptide: FMN reductase (NADH) RutF (174 aa).

It belongs to the non-flavoprotein flavin reductase family. RutF subfamily.

It carries out the reaction FMNH2 + NAD(+) = FMN + NADH + 2 H(+). Functionally, catalyzes the reduction of FMN to FMNH2 which is used to reduce pyrimidine by RutA via the Rut pathway. The chain is FMN reductase (NADH) RutF from Agrobacterium fabrum (strain C58 / ATCC 33970) (Agrobacterium tumefaciens (strain C58)).